The sequence spans 86 residues: Sodium channel neurotoxin MeuNaTxalpha-5 (86 aa).

The first 19 residues, 1–19 (MNYLILISFALLVITGVES), serve as a signal peptide directing secretion. Residues 21 to 85 (RDAYIAKPHN…VPIRIPGKCH (65 aa)) form the LCN-type CS-alpha/beta domain. Intrachain disulfides connect cysteine 31–cysteine 84, cysteine 35–cysteine 57, cysteine 43–cysteine 67, and cysteine 47–cysteine 69. Position 86 (arginine 86) is a propeptide, removed by a carboxypeptidase.

The protein belongs to the long (4 C-C) scorpion toxin superfamily. Sodium channel inhibitor family. Alpha subfamily. Expressed by the venom gland.

It localises to the secreted. Its function is as follows. Alpha toxins bind voltage-independently at site-3 of sodium channels (Nav) and inhibit the inactivation of the activated channels, thereby blocking neuronal transmission. This toxin inhibits inactivation of Nav1.6/SCN8A (EC(50)=790 nM) and drosophila DmNav1 (EC(50)=280 nM). The toxin (1 uM) does not significantly shift the midpoint of activation at the two channels, but induces a significant depolarizing shift in the V(1/2) of inactivation of the channels. Has antimicrobial activity. The protein is Sodium channel neurotoxin MeuNaTxalpha-5 of Mesobuthus eupeus (Lesser Asian scorpion).